The sequence spans 188 residues: Ribosome-recycling factor (188 aa).

It belongs to the RRF family.

The protein localises to the cytoplasm. Functionally, responsible for the release of ribosomes from messenger RNA at the termination of protein biosynthesis. May increase the efficiency of translation by recycling ribosomes from one round of translation to another. The protein is Ribosome-recycling factor of Dinoroseobacter shibae (strain DSM 16493 / NCIMB 14021 / DFL 12).